We begin with the raw amino-acid sequence, 595 residues long: Guanylate-binding protein 3 (595 aa).

Residues 1 to 309 (MAPEIHMTGP…NAISRGDLPC (309 aa)) form a GTPase domain (Globular) region. One can recognise a GB1/RHD3-type G domain in the interval 35-276 (TQPVVVVAIV…FCSYIFSNSK (242 aa)). GTP contacts are provided by residues 45 to 52 (GLYRTGKS), 67 to 69 (LGS), and 97 to 101 (DTEGL). A coiled-coil region spans residues 482–595 (EKEKEIEVEC…KRYMSHKLKI (114 aa)).

It belongs to the TRAFAC class dynamin-like GTPase superfamily. GB1/RHD3 GTPase family. GB1 subfamily. Heterodimer with other family members, including GBP1, GBP2 and GBP5. Dimerization regulates subcellular location.

It is found in the cytoplasm. Its subcellular location is the perinuclear region. The protein localises to the golgi apparatus membrane. It carries out the reaction GTP + H2O = GDP + phosphate + H(+). In terms of biological role, interferon (IFN)-inducible GTPase that plays important roles in innate immunity against a diverse range of bacterial, viral and protozoan pathogens. Hydrolyzes GTP very efficiently; GDP rather than GMP is the major reaction product. Following infection, recruited to the pathogen-containing vacuoles or vacuole-escaped bacteria and acts as a positive regulator of inflammasome assembly by promoting the release of inflammasome ligands from bacteria. Acts by promoting lysis of pathogen-containing vacuoles, releasing pathogens into the cytosol. Following pathogen release in the cytosol, promotes recruitment of proteins that mediate bacterial cytolysis: this liberates ligands that are detected by inflammasomes, such as lipopolysaccharide (LPS) that activates the non-canonical CASP4/CASP11 inflammasome or double-stranded DNA (dsDNA) that activates the AIM2 inflammasome. Exhibits antiviral activity against influenza virus. Functionally, shows the most prominent antiviral activity in epithelial cells. This is Guanylate-binding protein 3 (GBP3) from Homo sapiens (Human).